The primary structure comprises 935 residues: MAPAGILNGKLVSAQIRDRLKNQVTRMQEQVPGFTPGLAILQVGDRDDSNLYINVKLKAAEEIGIKATHIKLPRTSTESEVLKYVISLNEDASVHGFIVQLPLDSENSINTEAVINAIAPEKDVDGLTSVSAGKLARGDLNDCFIPCTPKGCLELIKEAGVQIAGRHAVVVGRSKIVGAPMHDLLLWNNATVTTCHSKTANLDKEVNKGDILVVATGQPEMVKGEWIKPGAVVIDCGINYVPDDTKPNGRKVVGDVAYDEAKERASFITPVPGGVGPMTVAMLMQSTVESAQRFLQKFKPGKWTIQYNKLNLKTPVPSDIAISRSCKPKLIGNLAREIGLLTEEVELYGETKAKVLLSALDRLKHQPDGKYVVVTGITPTPLGEGKSTTTIGLVQALGAHLRQNVFACVRQPSQGPTFGIKGGAAGGGYSQVIPMEEFNLHLTGDIHAITAANNLVAAAIDARIFHELTQTDKALFNRLVPSVNGIRKFSDIQIRRLRRLGIEKTDPTTLTDDEINRFARLDIDPETITWQRVLDTNDRFLRKITIGQSPTEKGHTRTAQFDISVASEIMAVLALTSSLEDMRERLGRMVVASSKKGEPISCEDLGVSGALTVLMKDAIKPNLMQTLEGTPVFVHAGPFANIAHGNSSIIADRIALKLVGPEGFVVTEAGFGADIGMEKFFNIKCRYSGLQPHVVVLVATVRALKMHGGGPTVTAGLPLPKAYTEEDLDLVEKGFSNLRKQIENARMFGVPVVVAVNVFKTDTDAELDLVSRLSREHGAFDAVKCTHWAEGGQGALALAQAVQRASQAPSSFQLLYDLKLSIEDKIRIIAQRIYGADDIELLPEAQNKAEIYTKQGFGNLPICMAKTHLSLSHNPEQKGVPTGFVLPIRDIRASVGAGFLYPLVGTMSTMPGLPTRPCFYDIDLDPETEQVNGLF.

Position 1 is an N-acetylmethionine (Met-1). Residues Ala-2–Ala-291 form a methylenetetrahydrofolate dehydrogenase and methenyltetrahydrofolate cyclohydrolase (D/C) domain region. Residues Tyr-52–Lys-56 and Val-99–Leu-101 each bind substrate. The active site involves Lys-56. NADP(+) contacts are provided by residues Gly-172–Ser-174 and Ser-197. Substrate is bound at residue Pro-272 to Gly-276. Residues Leu-310–Phe-935 are formyltetrahydrofolate synthetase domain. Position 318 is a phosphoserine (Ser-318). Residue Thr-380–Ser-387 participates in ATP binding. Ser-413 and Ser-490 each carry phosphoserine.

In the N-terminal section; belongs to the tetrahydrofolate dehydrogenase/cyclohydrolase family. The protein in the C-terminal section; belongs to the formate--tetrahydrofolate ligase family. In terms of assembly, homodimer.

It localises to the cytoplasm. It carries out the reaction (6R)-5,10-methylene-5,6,7,8-tetrahydrofolate + NADP(+) = (6R)-5,10-methenyltetrahydrofolate + NADPH. The enzyme catalyses (6R)-5,10-methenyltetrahydrofolate + H2O = (6R)-10-formyltetrahydrofolate + H(+). The catalysed reaction is (6S)-5,6,7,8-tetrahydrofolate + formate + ATP = (6R)-10-formyltetrahydrofolate + ADP + phosphate. The protein operates within one-carbon metabolism; tetrahydrofolate interconversion. Trifunctional enzyme that catalyzes the interconversion of three forms of one-carbon-substituted tetrahydrofolate: (6R)-5,10-methylene-5,6,7,8-tetrahydrofolate, 5,10-methenyltetrahydrofolate and (6S)-10-formyltetrahydrofolate. These derivatives of tetrahydrofolate are differentially required in nucleotide and amino acid biosynthesis, (6S)-10-formyltetrahydrofolate being required for purine biosynthesis while (6R)-5,10-methylene-5,6,7,8-tetrahydrofolate is used for serine and methionine biosynthesis for instance. The polypeptide is C-1-tetrahydrofolate synthase, cytoplasmic (Mthfd1) (Mus musculus (Mouse)).